Consider the following 120-residue polypeptide: NAD(P)H-quinone oxidoreductase subunit 3 (120 aa).

The next 3 helical transmembrane spans lie at 7-27, 64-84, and 89-109; these read YEYF…SLTA, MFAL…PWAV, and LGLL…VALV.

This sequence belongs to the complex I subunit 3 family. As to quaternary structure, NDH-1 can be composed of about 15 different subunits; different subcomplexes with different compositions have been identified which probably have different functions.

The protein resides in the cellular thylakoid membrane. The enzyme catalyses a plastoquinone + NADH + (n+1) H(+)(in) = a plastoquinol + NAD(+) + n H(+)(out). It carries out the reaction a plastoquinone + NADPH + (n+1) H(+)(in) = a plastoquinol + NADP(+) + n H(+)(out). Functionally, NDH-1 shuttles electrons from an unknown electron donor, via FMN and iron-sulfur (Fe-S) centers, to quinones in the respiratory and/or the photosynthetic chain. The immediate electron acceptor for the enzyme in this species is believed to be plastoquinone. Couples the redox reaction to proton translocation, and thus conserves the redox energy in a proton gradient. Cyanobacterial NDH-1 also plays a role in inorganic carbon-concentration. This chain is NAD(P)H-quinone oxidoreductase subunit 3, found in Microcystis aeruginosa (strain NIES-843 / IAM M-2473).